A 233-amino-acid chain; its full sequence is Large ribosomal subunit protein uL1 (233 aa).

Belongs to the universal ribosomal protein uL1 family. Part of the 50S ribosomal subunit.

Functionally, binds directly to 23S rRNA. The L1 stalk is quite mobile in the ribosome, and is involved in E site tRNA release. Protein L1 is also a translational repressor protein, it controls the translation of the L11 operon by binding to its mRNA. This is Large ribosomal subunit protein uL1 from Shewanella oneidensis (strain ATCC 700550 / JCM 31522 / CIP 106686 / LMG 19005 / NCIMB 14063 / MR-1).